The sequence spans 345 residues: Methionine import ATP-binding protein MetN 4 (345 aa).

One can recognise an ABC transporter domain in the interval 2-241 (IELTNITKTF…PQLRTTKRFV (240 aa)). 38–45 (GYSGAGKS) serves as a coordination point for ATP.

This sequence belongs to the ABC transporter superfamily. Methionine importer (TC 3.A.1.24) family. The complex is composed of two ATP-binding proteins (MetN), two transmembrane proteins (MetI) and a solute-binding protein (MetQ).

The protein localises to the cell membrane. The enzyme catalyses L-methionine(out) + ATP + H2O = L-methionine(in) + ADP + phosphate + H(+). The catalysed reaction is D-methionine(out) + ATP + H2O = D-methionine(in) + ADP + phosphate + H(+). Functionally, part of the ABC transporter complex MetNIQ involved in methionine import. Responsible for energy coupling to the transport system. In Oceanobacillus iheyensis (strain DSM 14371 / CIP 107618 / JCM 11309 / KCTC 3954 / HTE831), this protein is Methionine import ATP-binding protein MetN 4.